Consider the following 729-residue polypeptide: Transketolase (729 aa).

His-97 is a binding site for substrate. Residues His-138 and 186–188 (GPL) each bind thiamine diphosphate. Asp-227 contacts Mg(2+). Thiamine diphosphate is bound by residues Gly-228 and Asn-257. Positions 257 and 259 each coordinate Mg(2+). His-332, Arg-423, and Ser-450 together coordinate substrate. His-332 is a thiamine diphosphate binding site. Glu-477 acts as the Proton donor in catalysis. Thiamine diphosphate is bound at residue Phe-503. Residues His-527, Asp-535, and Arg-586 each contribute to the substrate site.

It belongs to the transketolase family. Homodimer. Mg(2+) serves as cofactor. Requires Ca(2+) as cofactor. Mn(2+) is required as a cofactor. It depends on Co(2+) as a cofactor. The cofactor is thiamine diphosphate.

It catalyses the reaction D-sedoheptulose 7-phosphate + D-glyceraldehyde 3-phosphate = aldehydo-D-ribose 5-phosphate + D-xylulose 5-phosphate. Catalyzes the transfer of a two-carbon ketol group from a ketose donor to an aldose acceptor, via a covalent intermediate with the cofactor thiamine pyrophosphate. This is Transketolase from Streptococcus pyogenes serotype M6 (strain ATCC BAA-946 / MGAS10394).